The sequence spans 66 residues: Large ribosomal subunit protein uL29 (66 aa).

The protein belongs to the universal ribosomal protein uL29 family.

The chain is Large ribosomal subunit protein uL29 from Bartonella quintana (strain Toulouse) (Rochalimaea quintana).